The sequence spans 49 residues: Large ribosomal subunit protein bL33A (49 aa).

It belongs to the bacterial ribosomal protein bL33 family.

In Bacillus pumilus (strain SAFR-032), this protein is Large ribosomal subunit protein bL33A.